The following is a 436-amino-acid chain: 3-ketoacyl-CoA thiolase (436 aa).

Cys99 acts as the Acyl-thioester intermediate in catalysis. Active-site proton acceptor residues include His392 and Cys422.

The protein belongs to the thiolase-like superfamily. Thiolase family. Heterotetramer of two alpha chains (FadJ) and two beta chains (FadI).

It is found in the cytoplasm. It catalyses the reaction an acyl-CoA + acetyl-CoA = a 3-oxoacyl-CoA + CoA. It participates in lipid metabolism; fatty acid beta-oxidation. Its function is as follows. Catalyzes the final step of fatty acid oxidation in which acetyl-CoA is released and the CoA ester of a fatty acid two carbons shorter is formed. The polypeptide is 3-ketoacyl-CoA thiolase (Shewanella woodyi (strain ATCC 51908 / MS32)).